The primary structure comprises 166 residues: MAAIPPDTWQPPNVYLETSMGVIVLELYWKHAPKTCKNFAELARRGYYNGTKFHRIIKDFMIQGGDPTGTGRGGASIYGKQFEDELHPDLKFTGAGILAMANAGPDTNGSQFFVTLAPTQWLDGKHTIFGRVCQGIGMVNRVGMVETNSQDRPVDDVKILKAYPSG.

The region spanning 10-164 is the PPIase cyclophilin-type domain; it reads QPPNVYLETS…DDVKILKAYP (155 aa). Residues 54–65, 70–71, 99–104, 109–113, T119, and K125 each bind cyclosporin A; these read HRIIKDFMIQGG, TG, AMANAG, and GSQFF. The residue at position 149 (S149) is a Phosphoserine.

This sequence belongs to the cyclophilin-type PPIase family. PPIL1 subfamily. In terms of assembly, identified in the spliceosome C complex. Interacts with SNW1/SKIP. Interacts with CDC40/PRP17; this interaction leads to CDC40 isomerization. Interacts with RBM22.

The protein resides in the nucleus. It catalyses the reaction [protein]-peptidylproline (omega=180) = [protein]-peptidylproline (omega=0). With respect to regulation, inhibited by Cyclosporin A. Functionally, involved in pre-mRNA splicing as component of the spliceosome. PPIases accelerate the folding of proteins. It catalyzes the cis-trans isomerization of proline imidic peptide bonds in oligopeptides. Catalyzes prolyl peptide bond isomerization in CDC40/PRP17. Plays an important role in embryonic brain development; this function is independent of its isomerase activity. The protein is Peptidyl-prolyl cis-trans isomerase-like 1 (Ppil1) of Mus musculus (Mouse).